The chain runs to 2162 residues: Calpain-type cysteine protease ADL1 (2162 aa).

The N-terminal stretch at 1–33 (MEEEEHRGVVLVCSICGFLFAVLGPLSFWILWA) is a signal peptide. Residues 34 to 70 (VNWRPWRLYSWIYARKWPAYVQGPQLSTLCSFFTLFA) are Extracellular-facing. A helical membrane pass occupies residues 71-91 (WLVVVSPITVLLVWGGILIAL). The Cytoplasmic segment spans residues 92 to 95 (LERN). The chain crosses the membrane as a helical span at residues 96-116 (IIGLAVIMVGVALLLSFYSIM). At 117 to 127 (LWWRTQWQSSK) the chain is on the extracellular side. The helical transmembrane segment at 128–148 (AVAYLLLLAVGLLCAYEFCAV) threads the bilayer. Topologically, residues 149–164 (YVTTGASASELNSPSG) are cytoplasmic. A helical membrane pass occupies residues 165–185 (FFFGVSAISLAINMLFISKIL). The Extracellular portion of the chain corresponds to 186 to 236 (FNGSGFDVDEYVRRLYKFAYSDCVEVAPVSCSPDPPDPSELYMTKSSRVLH). The chain crosses the membrane as a helical span at residues 237-257 (LGLLYLCSLMVLVVYSILYGL). Over 258-264 (TSKEARW) the chain is Cytoplasmic. Residues 265-285 (LGALTSVAVVILDWNLGLCSF) form a helical membrane-spanning segment. The Extracellular segment spans residues 286–294 (RFELLKSRM). A helical membrane pass occupies residues 295–315 (IALFVAGTSRVFLICFGVHYW). Topologically, residues 316-320 (YLGHC) are cytoplasmic. Residues 321-341 (ISYAFVASVLLAAAVSCWLSI) traverse the membrane as a helical segment. The Extracellular portion of the chain corresponds to 342–626 (SNPSVARIDA…LMFHQVAGSP (285 aa)). Residues 366 to 403 (KGQTSSSNSSDGCGSSVKRSSGSVEAGPHGNATDSMYR) are disordered. A compositionally biased stretch (low complexity) spans 370–381 (SSSNSSDGCGSS). A helical membrane pass occupies residues 627–647 (IRAFVVFTLIFIIETVTVAVH). At 648 to 663 (RPKPIKVINATHEQFE) the chain is on the cytoplasmic side. Residues 664 to 684 (FGFSILLLSPVVCSIMAFIWS) form a helical membrane-spanning segment. Over 685-697 (LCAEEMTMTSKPR) the chain is Extracellular. The chain crosses the membrane as a helical span at residues 698–718 (KYGFIAWLLSTCVGLLLSFLS). Topologically, residues 719–722 (KSSV) are cytoplasmic. The chain crosses the membrane as a helical span at residues 723 to 743 (ILGLSLTVPLMVACLSFAIPI). Residues 744–773 (WMRNGYRFWIPGGELDSRENIRQAPGKKER) lie on the Extracellular side of the membrane. The chain crosses the membrane as a helical span at residues 774–794 (ALFAISITVFTASVIGLGAIV). Residues 795–825 (SAKPLDALGYKGWDADKKSFYSPYATSMYLG) are Cytoplasmic-facing. A helical membrane pass occupies residues 826 to 846 (WALSSTIAVLATGVIPIVAWF). The Extracellular segment spans residues 847-856 (ATYRFSPSSA). Residues 857-877 (ICVGLFATVLVSFCGVSYWGV) form a helical membrane-spanning segment. At 878–890 (VNSRQDGVPLKAD) the chain is on the cytoplasmic side. A helical membrane pass occupies residues 891 to 911 (FLAALLPLLCIPAVFSLFTGM). Residues 912-924 (YKWKDDDWKISRG) lie on the Extracellular side of the membrane. The chain crosses the membrane as a helical span at residues 925–945 (VYLFVGMGVLLLLGAISAVIV). At 946-949 (TIRP) the chain is on the cytoplasmic side. Residues 950–970 (WTVGVACLLVILFLVFAIGVI) form a helical membrane-spanning segment. At 971-984 (HYWTSNNFYLTRTQ) the chain is on the extracellular side. The helical transmembrane segment at 985–1005 (MLLVCSLAFLLALAAFLMGLF) threads the bilayer. The Cytoplasmic portion of the chain corresponds to 1006–1019 (QEKPFVGASIGYFS). Residues 1020–1040 (FLFLLTGRALTVLLSPPIVVY) traverse the membrane as a helical segment. Residues 1041–1063 (SPRVLPVYVYDAHADSAKNVSYA) lie on the Extracellular side of the membrane. A helical transmembrane segment spans residues 1064–1084 (FLILYGIALATEVWGVIASLI). Residues 1085 to 2162 (LNPPFIGAAI…TKAPIKLEAV (1078 aa)) lie on the Cytoplasmic side of the membrane. Phosphoserine occurs at positions 1372 and 1377. The Calpain catalytic 1 domain maps to 1418–1611 (TGRHCGEIDL…ICSAEYGLFD (194 aa)). S1668 bears the Phosphoserine mark. A Calpain catalytic 2 domain is found at 1706-2008 (NFTDQEFPPD…FRSIYVCRVY (303 aa)). Catalysis depends on residues C1772, H1930, and N1950.

The protein belongs to the peptidase C2 family. In terms of processing, autocatalytic proteolytic cleavage leading to the production of mainly cytoplasmic localized subproducts of about 85 and 120 kDa. Ubiquitously expressed with higher levels in embryos, vasculatures, leaf primordia, leaf margins, and shoot apical meristem (SAM).

It is found in the endoplasmic reticulum membrane. It localises to the cytoplasm. The protein localises to the cell membrane. Its subcellular location is the endosome membrane. In terms of biological role, essential protease involved in epiderm development. Required for aleurone cell development in the endosperm probably by maintaining and restricting the aleurone and embryonic epidermal L1 cell-layer fates as well as meristems organization. Involved in the maintenance of adaxial/abaxial axis information in developing leaves, probably by regulating cell proliferation and expansion. Does not need calcium ions to be active. The polypeptide is Calpain-type cysteine protease ADL1 (ADL1) (Oryza sativa subsp. japonica (Rice)).